The primary structure comprises 535 residues: Berberine bridge enzyme-like 3 (535 aa).

A signal peptide spans 1–19 (MKEALFGLYLVLLVSGLEA). A disulfide bridge connects residues Cys-32 and Cys-95. An N-linked (GlcNAc...) asparagine glycan is attached at Asn-52. An FAD-binding PCMH-type domain is found at 73-247 (NNKNLLAIVV…LSWKINLVEV (175 aa)). The segment at residues 110–172 (HDNEGLSYVS…QTLAFPAGIC (63 aa)) is a cross-link (6-(S-cysteinyl)-8alpha-(pros-histidyl)-FAD (His-Cys)). Residues Asn-214, Asn-257, Asn-292, Asn-321, Asn-341, Asn-415, Asn-439, and Asn-444 are each glycosylated (N-linked (GlcNAc...) asparagine).

The protein belongs to the oxygen-dependent FAD-linked oxidoreductase family. It depends on FAD as a cofactor. The FAD cofactor is bound via a bicovalent 6-S-cysteinyl, 8alpha-N1-histidyl FAD linkage.

It is found in the endoplasmic reticulum. It localises to the cell membrane. The protein localises to the secreted. Its subcellular location is the cell wall. Its function is as follows. Flavin-dependent oxidoreductase involved in the biosynthetic pathway to 4-hydroxyindole-3-carbonyl nitrile (4-OH-ICN), a cyanogenic metabolite required for inducible pathogen defense. Converts indole cyanohydrin into indole-3-carbonyl nitrile (ICN). This is Berberine bridge enzyme-like 3 from Arabidopsis thaliana (Mouse-ear cress).